The chain runs to 481 residues: Ribulose bisphosphate carboxylase large chain (481 aa).

Residues 1–2 (MS) constitute a propeptide that is removed on maturation. Residue Pro-3 is modified to N-acetylproline. N6,N6,N6-trimethyllysine is present on Lys-14. 2 residues coordinate substrate: Asn-123 and Thr-173. Residue Lys-175 is the Proton acceptor of the active site. Lys-177 serves as a coordination point for substrate. Positions 201, 203, and 204 each coordinate Mg(2+). N6-carboxylysine is present on Lys-201. His-294 functions as the Proton acceptor in the catalytic mechanism. Substrate is bound by residues Arg-295, His-327, and Ser-379.

This sequence belongs to the RuBisCO large chain family. Type I subfamily. In terms of assembly, heterohexadecamer of 8 large chains and 8 small chains; disulfide-linked. The disulfide link is formed within the large subunit homodimers. It depends on Mg(2+) as a cofactor. In terms of processing, the disulfide bond which can form in the large chain dimeric partners within the hexadecamer appears to be associated with oxidative stress and protein turnover.

The protein localises to the plastid. It carries out the reaction 2 (2R)-3-phosphoglycerate + 2 H(+) = D-ribulose 1,5-bisphosphate + CO2 + H2O. The enzyme catalyses D-ribulose 1,5-bisphosphate + O2 = 2-phosphoglycolate + (2R)-3-phosphoglycerate + 2 H(+). RuBisCO catalyzes two reactions: the carboxylation of D-ribulose 1,5-bisphosphate, the primary event in carbon dioxide fixation, as well as the oxidative fragmentation of the pentose substrate in the photorespiration process. Both reactions occur simultaneously and in competition at the same active site. The protein is Ribulose bisphosphate carboxylase large chain of Cuscuta obtusiflora (Peruvian dodder).